We begin with the raw amino-acid sequence, 894 residues long: ABC-transporter-regulating transcription factor (894 aa).

Positions Cys-71 to Cys-98 form a DNA-binding region, zn(2)-C6 fungal-type. Over residues Asn-159–Gly-174 the composition is skewed to polar residues. The interval Asn-159–Gly-219 is disordered. A compositionally biased stretch (low complexity) spans Ser-175–His-189. Polar residues predominate over residues Ser-199–Pro-210. The chain crosses the membrane as a helical span at residues Cys-649–Leu-669. A disordered region spans residues Ala-724–Pro-797. Over residues Ala-736 to Asp-750 the composition is skewed to basic and acidic residues. 2 stretches are compositionally biased toward polar residues: residues Glu-751 to Arg-761 and Leu-771 to Thr-792.

It localises to the nucleus. The protein resides in the membrane. Functionally, transcription factor that regulates expression of the genes related to resistance to azole compounds. The sequence is that of ABC-transporter-regulating transcription factor from Aspergillus oryzae (strain ATCC 42149 / RIB 40) (Yellow koji mold).